A 501-amino-acid polypeptide reads, in one-letter code: Aspartyl/glutamyl-tRNA(Asn/Gln) amidotransferase subunit B (501 aa).

The interval 272–291 (QETRHYQETDGTTSKGRPKE) is disordered.

It belongs to the GatB/GatE family. GatB subfamily. Heterotrimer of A, B and C subunits.

The catalysed reaction is L-glutamyl-tRNA(Gln) + L-glutamine + ATP + H2O = L-glutaminyl-tRNA(Gln) + L-glutamate + ADP + phosphate + H(+). The enzyme catalyses L-aspartyl-tRNA(Asn) + L-glutamine + ATP + H2O = L-asparaginyl-tRNA(Asn) + L-glutamate + ADP + phosphate + 2 H(+). Functionally, allows the formation of correctly charged Asn-tRNA(Asn) or Gln-tRNA(Gln) through the transamidation of misacylated Asp-tRNA(Asn) or Glu-tRNA(Gln) in organisms which lack either or both of asparaginyl-tRNA or glutaminyl-tRNA synthetases. The reaction takes place in the presence of glutamine and ATP through an activated phospho-Asp-tRNA(Asn) or phospho-Glu-tRNA(Gln). This Corynebacterium efficiens (strain DSM 44549 / YS-314 / AJ 12310 / JCM 11189 / NBRC 100395) protein is Aspartyl/glutamyl-tRNA(Asn/Gln) amidotransferase subunit B.